We begin with the raw amino-acid sequence, 264 residues long: H-2 class II histocompatibility antigen, I-E beta chain (264 aa).

The signal sequence occupies residues 1-31 (MVWLPRVPCVAAVILLLTVLSPPVALVRNSR). The beta-1 stretch occupies residues 32 to 121 (PRFLEYSTSE…IFDNFLVPRR (90 aa)). Residues 32 to 225 (PRFLEYSTSE…KAQSTSAQNK (194 aa)) lie on the Extracellular side of the membrane. Cystine bridges form between Cys-42/Cys-106 and Cys-144/Cys-200. A glycan (N-linked (GlcNAc...) asparagine) is linked at Asn-46. Residues 122–215 (VEPTVTVYPT…SLTDPVTVEW (94 aa)) are beta-2. One can recognise an Ig-like C1-type domain in the interval 124–214 (PTVTVYPTKT…PSLTDPVTVE (91 aa)). Residues 216-225 (KAQSTSAQNK) form a connecting peptide region. The helical transmembrane segment at 226-248 (MLSGVGGFVLGLLFLGAGLFIYF) threads the bilayer. At 249-264 (RNQKGQSGLQPTGLLS) the chain is on the cytoplasmic side.

The protein belongs to the MHC class II family. Ubiquitinated in immature dendritic cells leading to down-regulation of MHC class II.

It is found in the membrane. The protein is H-2 class II histocompatibility antigen, I-E beta chain (H2-Eb1) of Mus musculus (Mouse).